A 263-amino-acid chain; its full sequence is 3-methyl-2-oxobutanoate hydroxymethyltransferase (263 aa).

Residues Asp-43 and Asp-82 each coordinate Mg(2+). Residues 43–44, Asp-82, and Lys-111 contribute to the 3-methyl-2-oxobutanoate site; that span reads DS. Residue Glu-113 coordinates Mg(2+). The active-site Proton acceptor is Glu-179.

This sequence belongs to the PanB family. Homodecamer; pentamer of dimers. Mg(2+) is required as a cofactor.

It is found in the cytoplasm. It carries out the reaction 3-methyl-2-oxobutanoate + (6R)-5,10-methylene-5,6,7,8-tetrahydrofolate + H2O = 2-dehydropantoate + (6S)-5,6,7,8-tetrahydrofolate. The protein operates within cofactor biosynthesis; (R)-pantothenate biosynthesis; (R)-pantoate from 3-methyl-2-oxobutanoate: step 1/2. Its function is as follows. Catalyzes the reversible reaction in which hydroxymethyl group from 5,10-methylenetetrahydrofolate is transferred onto alpha-ketoisovalerate to form ketopantoate. The protein is 3-methyl-2-oxobutanoate hydroxymethyltransferase of Neisseria gonorrhoeae (strain ATCC 700825 / FA 1090).